Here is a 603-residue protein sequence, read N- to C-terminus: Glutamyl-tRNA(Gln) amidotransferase subunit B, mitochondrial (603 aa).

Disordered regions lie at residues 38–61 (RGRD…SNGA) and 72–91 (EQAR…PPEH). Polar residues predominate over residues 42-58 (WSSTSRRAIDTQTSGAS).

This sequence belongs to the GatB/GatE family. GatB subfamily. Subunit of the heterotrimeric GatCAB amidotransferase (AdT) complex, composed of A, B and C subunits.

It is found in the mitochondrion. It carries out the reaction L-glutamyl-tRNA(Gln) + L-glutamine + ATP + H2O = L-glutaminyl-tRNA(Gln) + L-glutamate + ADP + phosphate + H(+). Its function is as follows. Allows the formation of correctly charged Gln-tRNA(Gln) through the transamidation of misacylated Glu-tRNA(Gln) in the mitochondria. The reaction takes place in the presence of glutamine and ATP through an activated gamma-phospho-Glu-tRNA(Gln). The sequence is that of Glutamyl-tRNA(Gln) amidotransferase subunit B, mitochondrial from Paracoccidioides brasiliensis (strain Pb18).